The chain runs to 546 residues: Capsid protein VP1 (546 aa).

Residues 1-38 are disordered; the sequence is MMMASKDAPQSADGASGAGQLVPEVNTADPLPMEPVAG. The tract at residues 1-226 is shell domain; the sequence is MMMASKDAPQ…FLFLVPPTIE (226 aa). Residues 227 to 279 are P1 sub-domain 1; sequence QKTRAFTVPNIPLQTLSNSRFPSLIQGMILSPDASQVVQFQNGRCLIDGQLLG. Residues 227-545 form a protruding domain region; that stretch reads QKTRAFTVPN…TARGRLGVRR (319 aa). Residues 280-416 are P2 sub-domain; it reads TTPATSGQLF…GSSLSQAANL (137 aa). Positions 417 to 546 are P1 sub-domain 2; the sequence is APPVFPPGFG…ARGRLGVRRI (130 aa). Residues 538 to 545 are plays a role in binding to host histo-blood group structures antigens and in the formation of P-particles; that stretch reads RGRLGVRR.

It belongs to the caliciviridae capsid protein family. As to quaternary structure, homodimer. Homomultimer. Interacts with the minor capsid protein VP2. Interacts (via C-terminus) with host type I histo-blood group structures antigens at the surface of target cells. Post-translationally, may be cleaved by host protease to generate soluble capsid protein. Assembled capsid cannot be cleaved.

It is found in the virion. It localises to the host cytoplasm. Its function is as follows. Capsid protein self assembles to form an icosahedral capsid with a T=3 symmetry, about 38 nm in diameter, and consisting of 180 capsid proteins. A smaller form of capsid with a diameter of 23 nm might be capsid proteins assembled as icosahedron with T=1 symmetry. The capsid encapsulates the genomic RNA and is decorated with VP2 proteins. Attaches virion to target cells by binding histo-blood group antigens (HBGAs) present on gastroduodenal epithelial cells. The soluble capsid protein may play a role in viral immunoevasion. The sequence is that of Capsid protein VP1 from Southampton virus (strain GI/Human/United Kingdom/Southampton/1991) (SHV).